The primary structure comprises 139 residues: ATP synthase epsilon chain (139 aa).

The protein belongs to the ATPase epsilon chain family. F-type ATPases have 2 components, CF(1) - the catalytic core - and CF(0) - the membrane proton channel. CF(1) has five subunits: alpha(3), beta(3), gamma(1), delta(1), epsilon(1). CF(0) has three main subunits: a, b and c.

The protein localises to the cell inner membrane. Functionally, produces ATP from ADP in the presence of a proton gradient across the membrane. The chain is ATP synthase epsilon chain from Pseudomonas syringae pv. tomato (strain ATCC BAA-871 / DC3000).